Reading from the N-terminus, the 431-residue chain is Cleavage stimulation factor subunit 1 (431 aa).

WD repeat units lie at residues 106-145 (SHKGPCRVATYSRDGQLIATGSADASIKILDTERMLAKSA), 171-210 (DHVDEVTCLAFHPTEQILASGSRDYTLKLFDYSKPSAKRA), 215-254 (QEAEMLRSISFHPSGDFILVGTQHPTLRLYDINTFQCFVS), 260-301 (QHTD…TTFE), 303-343 (AHDG…TLVR), and 395-431 (GHNNIVRCIVHSPTNPGFMTCSDDFRARFWYRRSTTD).

In terms of assembly, homodimer. The CSTF complex is composed of CSTF1 (50 kDa subunit), CSTF2 (64 kDa subunit) and CSTF3 (77 kDa subunit). Interacts (via repeats WD) directly with CSTF3. Interacts (via repeat WD6) with BARD1. Interacts with ERCC6.

It is found in the nucleus. Functionally, one of the multiple factors required for polyadenylation and 3'-end cleavage of mammalian pre-mRNAs. May be responsible for the interaction of CSTF with other factors to form a stable complex on the pre-mRNA. This Mus musculus (Mouse) protein is Cleavage stimulation factor subunit 1 (Cstf1).